Reading from the N-terminus, the 154-residue chain is Isotocin-neurophysin IT 1 (154 aa).

The first 20 residues, 1–20 (MSGSMFSVFSLLYLLSVCSA), serve as a signal peptide directing secretion. A disulfide bond links cysteine 21 and cysteine 26. Glycine 29 carries the glycine amide modification. Cystine bridges form between cysteine 42/cysteine 86, cysteine 45/cysteine 59, cysteine 53/cysteine 76, cysteine 60/cysteine 66, cysteine 93/cysteine 105, cysteine 99/cysteine 117, and cysteine 106/cysteine 111.

The protein belongs to the vasopressin/oxytocin family.

Functionally, isotocin causes contraction of smooth muscles. The polypeptide is Isotocin-neurophysin IT 1 (Catostomus commersonii (White sucker)).